Reading from the N-terminus, the 544-residue chain is MKSLALALLVGGAIASGPQQQVLREPVDDPQAAETPLQKISDIFGHLSEQAGNVWEDVMDKFPDTLMDAITQTPPPKKHNRRPDSQWDHIVRGSDVQAVWVEGDAGEKHRKVGGRLDTYDLRVKAVDPSNLGIDTVKQYSGYLDDNENDKHLFYWFFESRNDPKNDPVVLWLNGGPGCSSLTGLFLELGPSSITKQLKVKYNEFSWNSNASVIFLDQPVNVGYSYSSSSVSNTQAAGKDVYALLTLFFEQFPEYSQQDFHIAGESYAGHYIPVFASEIMSHSHRNINLKSILVGNGLTDPLSQYPHYRPMACGEGGYPAVLSSSSCQAMDNALPRCLAMIQACYNTESRWSCVPASIYCNNALIGPYQRSGMNPYDVRSKCEGGNLCYTQLDDISKYLNQDAVMESLGAEVSSYESCNMDINRNFLFQGDWMQPYMRVVPTLLTQMPVLIYAGDADFICNWLGNKAWTEALEYPGHDEFAAAEMKNLTSLNHEDMKVIGQVKSAGNFTFMRLFGGGHMVPMDQPEASLEFFNRWLGGEWSAKSP.

The first 17 residues, 1-17 (MKSLALALLVGGAIASG), serve as a signal peptide directing secretion. The propeptide occupies 18–124 (PQQQVLREPV…RLDTYDLRVK (107 aa)). Cystine bridges form between Cys-178–Cys-417, Cys-312–Cys-326, Cys-336–Cys-359, Cys-343–Cys-352, and Cys-381–Cys-387. The N-linked (GlcNAc...) asparagine glycan is linked to Asn-209. Residue Ser-265 is part of the active site. Residue Asp-456 is part of the active site. Asn-506 carries N-linked (GlcNAc...) asparagine glycosylation. His-517 is an active-site residue.

The protein belongs to the peptidase S10 family.

Its subcellular location is the vacuole. The enzyme catalyses Release of a C-terminal amino acid with broad specificity.. Vacuolar carboxypeptidase involved in degradation of small peptides. Digests preferentially peptides containing an aliphatic or hydrophobic residue in P1' position, as well as methionine, leucine or phenylalanine in P1 position of ester substrate. The sequence is that of Carboxypeptidase Y homolog A (CPYA) from Ajellomyces capsulatus (strain G186AR / H82 / ATCC MYA-2454 / RMSCC 2432) (Darling's disease fungus).